A 267-amino-acid polypeptide reads, in one-letter code: Acetyl-coenzyme A carboxylase carboxyl transferase subunit beta 1 (267 aa).

The 259-residue stretch at 9–267 (TWQACPKCGR…NYGIGRSAHG (259 aa)) folds into the CoA carboxyltransferase N-terminal domain. Zn(2+) is bound by residues C13, C16, C31, and C34. A C4-type zinc finger spans residues 13–34 (CPKCGRHVHQRQWGTYQQCPYC).

It belongs to the AccD/PCCB family. Acetyl-CoA carboxylase is a heterohexamer composed of biotin carboxyl carrier protein (AccB), biotin carboxylase (AccC) and two subunits each of ACCase subunit alpha (AccA) and ACCase subunit beta (AccD). The cofactor is Zn(2+).

The protein resides in the cytoplasm. The catalysed reaction is N(6)-carboxybiotinyl-L-lysyl-[protein] + acetyl-CoA = N(6)-biotinyl-L-lysyl-[protein] + malonyl-CoA. Its pathway is lipid metabolism; malonyl-CoA biosynthesis; malonyl-CoA from acetyl-CoA: step 1/1. In terms of biological role, component of the acetyl coenzyme A carboxylase (ACC) complex. Biotin carboxylase (BC) catalyzes the carboxylation of biotin on its carrier protein (BCCP) and then the CO(2) group is transferred by the transcarboxylase to acetyl-CoA to form malonyl-CoA. This is Acetyl-coenzyme A carboxylase carboxyl transferase subunit beta 1 from Lactiplantibacillus plantarum (strain ATCC BAA-793 / NCIMB 8826 / WCFS1) (Lactobacillus plantarum).